We begin with the raw amino-acid sequence, 431 residues long: Dihydroorotase (431 aa).

Zn(2+) contacts are provided by His59 and His61. Residues 61-63 (HLR) and Asn93 each bind substrate. Positions 151, 178, 231, and 304 each coordinate Zn(2+). Asp304 is an active-site residue. Substrate-binding positions include His308 and 322–323 (FG).

It belongs to the metallo-dependent hydrolases superfamily. DHOase family. Class I DHOase subfamily. Requires Zn(2+) as cofactor.

It catalyses the reaction (S)-dihydroorotate + H2O = N-carbamoyl-L-aspartate + H(+). The protein operates within pyrimidine metabolism; UMP biosynthesis via de novo pathway; (S)-dihydroorotate from bicarbonate: step 3/3. Functionally, catalyzes the reversible cyclization of carbamoyl aspartate to dihydroorotate. The protein is Dihydroorotase of Caldanaerobacter subterraneus subsp. tengcongensis (strain DSM 15242 / JCM 11007 / NBRC 100824 / MB4) (Thermoanaerobacter tengcongensis).